A 379-amino-acid polypeptide reads, in one-letter code: UDP-N-acetylglucosamine--N-acetylmuramyl-(pentapeptide) pyrophosphoryl-undecaprenol N-acetylglucosamine transferase (379 aa).

UDP-N-acetyl-alpha-D-glucosamine-binding positions include 19–21, N133, R174, S207, I261, and Q306; that span reads TGG.

Belongs to the glycosyltransferase 28 family. MurG subfamily.

The protein localises to the cell inner membrane. The enzyme catalyses di-trans,octa-cis-undecaprenyl diphospho-N-acetyl-alpha-D-muramoyl-L-alanyl-D-glutamyl-meso-2,6-diaminopimeloyl-D-alanyl-D-alanine + UDP-N-acetyl-alpha-D-glucosamine = di-trans,octa-cis-undecaprenyl diphospho-[N-acetyl-alpha-D-glucosaminyl-(1-&gt;4)]-N-acetyl-alpha-D-muramoyl-L-alanyl-D-glutamyl-meso-2,6-diaminopimeloyl-D-alanyl-D-alanine + UDP + H(+). It functions in the pathway cell wall biogenesis; peptidoglycan biosynthesis. Cell wall formation. Catalyzes the transfer of a GlcNAc subunit on undecaprenyl-pyrophosphoryl-MurNAc-pentapeptide (lipid intermediate I) to form undecaprenyl-pyrophosphoryl-MurNAc-(pentapeptide)GlcNAc (lipid intermediate II). The polypeptide is UDP-N-acetylglucosamine--N-acetylmuramyl-(pentapeptide) pyrophosphoryl-undecaprenol N-acetylglucosamine transferase (Porphyromonas gingivalis (strain ATCC BAA-308 / W83)).